The following is a 144-amino-acid chain: 3-hydroxyacyl-[acyl-carrier-protein] dehydratase FabZ (144 aa).

H51 is an active-site residue.

It belongs to the thioester dehydratase family. FabZ subfamily.

The protein resides in the cytoplasm. It catalyses the reaction a (3R)-hydroxyacyl-[ACP] = a (2E)-enoyl-[ACP] + H2O. In terms of biological role, involved in unsaturated fatty acids biosynthesis. Catalyzes the dehydration of short chain beta-hydroxyacyl-ACPs and long chain saturated and unsaturated beta-hydroxyacyl-ACPs. This Lactococcus lactis subsp. lactis (strain IL1403) (Streptococcus lactis) protein is 3-hydroxyacyl-[acyl-carrier-protein] dehydratase FabZ (fabZ2).